A 224-amino-acid chain; its full sequence is MTTVLEILDVSKCYGRRNRVCVLSNINLKIQRGEFAALIGSSGSGKSTLLHIASLLEVPTSGTVVLNGTVCAPASDKTRTMMRRKHMGFVYQFHHLLQEFSVLENVMLPQRILGHGASTAESVAAAILEEMGLQDKAECRISELSGGERQRVAVARGIVNSPTIILADEPTGSLDPQMSKAVFSVLHKHVKAKNLAGLVATHDRTLAKQTDRVLSLSGGMLTEL.

Positions 5–224 (LEILDVSKCY…SLSGGMLTEL (220 aa)) constitute an ABC transporter domain. Residue 40-47 (GSSGSGKS) participates in ATP binding.

This sequence belongs to the ABC transporter superfamily. Lipoprotein translocase (TC 3.A.1.125) family. The complex is composed of two ATP-binding proteins (LolD) and two transmembrane proteins (LolC and LolE).

The protein localises to the cell inner membrane. Functionally, part of the ABC transporter complex LolCDE involved in the translocation of mature outer membrane-directed lipoproteins, from the inner membrane to the periplasmic chaperone, LolA. Responsible for the formation of the LolA-lipoprotein complex in an ATP-dependent manner. The polypeptide is Lipoprotein-releasing system ATP-binding protein LolD (Anaplasma marginale (strain St. Maries)).